Consider the following 425-residue polypeptide: MGEEANDDKKPTTKFELERETELRFEVEASQSVQLELLTGMAEIFGTELTRNKKFTFDAGAKVAVFTWHGCSVQLSGRTEVAYVSKDTPMLLYLNTHTALEQMRRQAEKEEERGPRVMVVGPTDVGKSTVCRLLLNYAVRLGRRPTYVELDVGQGSVSIPGTMGALYIERPADVEEGFSIQAPLVYHFGSTTPGTNIKLYNKITSRLADVFNQRCEVNRRASVSGCVINTCGWVKGSGYQALVHAASAFEVDVVVVLDQERLYNELKRDLPHFVRTVLLPKSGGVVERSKDFRRECRDERIREYFYGFRGCFYPHAFNVKFSDVKIYKVGAPTIPDSCLPLGMSQEDNQLKLVPVTPGRDMVHHLLSVSTAEGTEENLSETSVAGFIVVTSVDLEHQVFTVLSPAPRPLPKNFLLIMDIRFMDLK.

Residues E22, K62, and 124–129 contribute to the ATP site; that span reads DVGKST.

This sequence belongs to the Clp1 family. Clp1 subfamily. In terms of assembly, component of the tRNA splicing endonuclease complex, composed of CLP1, TSEN2, TSEN15, TSEN34 and TSEN54. Component of pre-mRNA cleavage complex II (CF-II). Also associates with numerous components of the pre-mRNA cleavage complex I (CF-I/CFIm), including NUDT21, CPSF2, CPSF3, CPSF6 and CPSF7. Interacts with CSTF2 and SYMPK. The cofactor is Mg(2+). Requires Mn(2+) as cofactor. Ni(2+) is required as a cofactor.

The protein localises to the nucleus. It carries out the reaction a 5'-end dephospho-2'-deoxyribonucleoside-DNA + ATP = a 5'-end 5'-phospho-2'-deoxyribonucleoside-DNA + ADP + H(+). The catalysed reaction is a 5'-end dephospho-ribonucleoside-RNA + ATP = a 5'-end 5'-phospho-ribonucleoside-RNA + ADP + H(+). In terms of biological role, polynucleotide kinase that can phosphorylate the 5'-hydroxyl groups of double-stranded RNA (dsRNA), single-stranded RNA (ssRNA), double-stranded DNA (dsDNA) and double-stranded DNA:RNA hybrids. dsRNA is phosphorylated more efficiently than dsDNA, and the RNA component of a DNA:RNA hybrid is phosphorylated more efficiently than the DNA component. Plays a key role in both tRNA splicing and mRNA 3'-end formation. Component of the tRNA splicing endonuclease complex: phosphorylates the 5'-terminus of the tRNA 3'-exon during tRNA splicing; this phosphorylation event is a prerequisite for the subsequent ligation of the two exon halves and the production of a mature tRNA. Its role in tRNA splicing and maturation is required for cerebellar development. Component of the pre-mRNA cleavage complex II (CF-II), which seems to be required for mRNA 3'-end formation. Also phosphorylates the 5'-terminus of exogenously introduced short interfering RNAs (siRNAs), which is a necessary prerequisite for their incorporation into the RNA-induced silencing complex (RISC). However, endogenous siRNAs and microRNAs (miRNAs) that are produced by the cleavage of dsRNA precursors by DICER1 already contain a 5'-phosphate group, so this protein may be dispensible for normal RNA-mediated gene silencing. This Homo sapiens (Human) protein is Polyribonucleotide 5'-hydroxyl-kinase Clp1.